An 877-amino-acid polypeptide reads, in one-letter code: DNA polymerase I (877 aa).

One can recognise a 5'-3' exonuclease domain in the interval 177–270 (TPAQFIDLKA…LEDLVYSGPD (94 aa)). A 3'-5' exonuclease domain is found at 302–465 (DFTIVDQISQ…TEPILLEKLS (164 aa)).

It belongs to the DNA polymerase type-A family. Single-chain monomer with multiple functions.

The enzyme catalyses DNA(n) + a 2'-deoxyribonucleoside 5'-triphosphate = DNA(n+1) + diphosphate. Functionally, in addition to polymerase activity, this DNA polymerase exhibits 3'-5' and 5'-3' exonuclease activity. The sequence is that of DNA polymerase I (polA) from Streptococcus pneumoniae serotype 4 (strain ATCC BAA-334 / TIGR4).